Consider the following 416-residue polypeptide: Gamma-glutamyl phosphate reductase (416 aa).

This sequence belongs to the gamma-glutamyl phosphate reductase family.

It localises to the cytoplasm. The enzyme catalyses L-glutamate 5-semialdehyde + phosphate + NADP(+) = L-glutamyl 5-phosphate + NADPH + H(+). The protein operates within amino-acid biosynthesis; L-proline biosynthesis; L-glutamate 5-semialdehyde from L-glutamate: step 2/2. Functionally, catalyzes the NADPH-dependent reduction of L-glutamate 5-phosphate into L-glutamate 5-semialdehyde and phosphate. The product spontaneously undergoes cyclization to form 1-pyrroline-5-carboxylate. The sequence is that of Gamma-glutamyl phosphate reductase from Salmonella agona (strain SL483).